A 256-amino-acid polypeptide reads, in one-letter code: C-8 sterol isomerase (256 aa).

The tract at residues 1 to 31 (MPPKKQSSSGGNKPSGSGSSSGRSSSGSSCR) is disordered. Low complexity predominate over residues 7–30 (SSSGGNKPSGSGSSSGRSSSGSSC). Residues 40 to 60 (IGGWLKFFAILFALVAPIAYV) traverse the membrane as a helical segment.

Belongs to the ERG2 family.

It localises to the endoplasmic reticulum membrane. The protein operates within steroid metabolism; ergosterol biosynthesis; ergosterol from zymosterol: step 2/5. Catalyzes the reaction which results in unsaturation at C-7 in the B ring of sterols. The sequence is that of C-8 sterol isomerase (erg-1) from Neurospora crassa (strain ATCC 24698 / 74-OR23-1A / CBS 708.71 / DSM 1257 / FGSC 987).